We begin with the raw amino-acid sequence, 252 residues long: O-methyltransferase hkm8 (252 aa).

S-adenosyl-L-methionine is bound by residues Glu-73, 75 to 76 (GT), Ser-81, and Asp-100.

Belongs to the class I-like SAM-binding methyltransferase superfamily. Cation-dependent O-methyltransferase family.

The protein operates within secondary metabolite biosynthesis. In terms of biological role, O-methyltransferase; part of the gene cluster that mediates the biosynthesis of hancockiamides, an unusual new family of N-cinnamoylated piperazines. The NRPS hkm10 and the NmrA-like reductase hkm9 are proposed to convert two molecules of L-Phe to the intermediary piperazine called xenocockiamide A. Xenocockiamide A is then converted to hancockiamide D via a series of hydroxylations and O-methylations. The tyrosinase hkm6 may catalyze an aromatic hydroxylation, then the 2-oxoglutarate-dependent Fe(II) dioxygenase hkm4 and the FAD-dependent phenol hydroxylase hkm7 may catalyze consecutive hydroxylations to install 2 more hydroxy groups, and the methyltransferase hkm8 probably catalyzes two methylations using 2 molecules of S-adenosyl-L-methionine (SAM). The NRPS hkm11 activates and transfers trans-cinnamate supplied by the PAL hkm12 to hancockiamide D and produces hancockiamide A. NRPS Hkm11 has the flexibility to tolerate the bulky hancockiamide G as a substrate and the absence of the acetyl-transferase hkm3 opens up the opportunity for hkm11 to introduce a second N-cinnamoyl moiety. The cytochrome P450 monooxygenase hkm5 catalyzes the methylenedioxy bridge formation, converting hancockiamide A into hancockiamide G. Hkm5 can also convert hancockiamide B into hancockiamide C, and hancockiamide D into hancockiamide H. The N-acetyltransferase hkm3 finally transfers an acetyl group to 1-N of piperazine, converting hancockiamide A into hancockiamide B and hancockiamide G into hancockiamide C. In Aspergillus hancockii, this protein is O-methyltransferase hkm8.